The primary structure comprises 351 residues: Glycerol-3-phosphate dehydrogenase 1-like protein (351 aa).

Residue 11 to 16 (GSGNWG) participates in NAD(+) binding. Position 121 (K121) interacts with substrate. A154 lines the NAD(+) pocket. Catalysis depends on K205, which acts as the Proton acceptor. Residues R271, K298, and Q300 each contribute to the NAD(+) site. Residue 271-272 (RN) coordinates substrate.

This sequence belongs to the NAD-dependent glycerol-3-phosphate dehydrogenase family.

Its subcellular location is the cytoplasm. The catalysed reaction is sn-glycerol 3-phosphate + NAD(+) = dihydroxyacetone phosphate + NADH + H(+). Plays a role in regulating cardiac sodium current. The polypeptide is Glycerol-3-phosphate dehydrogenase 1-like protein (gpd1l) (Danio rerio (Zebrafish)).